The following is a 139-amino-acid chain: Large ribosomal subunit protein uL22c (139 aa).

The protein belongs to the universal ribosomal protein uL22 family. In terms of assembly, part of the 50S ribosomal subunit.

It localises to the plastid. Its subcellular location is the chloroplast. Functionally, this protein binds specifically to 23S rRNA. The globular domain of the protein is located near the polypeptide exit tunnel on the outside of the subunit, while an extended beta-hairpin is found that lines the wall of the exit tunnel in the center of the 70S ribosome. In Cycas taitungensis (Prince sago), this protein is Large ribosomal subunit protein uL22c (rpl22).